Here is a 228-residue protein sequence, read N- to C-terminus: Orotidine 5'-phosphate decarboxylase (228 aa).

Substrate-binding positions include aspartate 10, lysine 33, 60-69 (DLKLYDIPHT), threonine 116, arginine 178, glutamine 187, glycine 207, and arginine 208. Lysine 62 acts as the Proton donor in catalysis.

The protein belongs to the OMP decarboxylase family. Type 1 subfamily. Homodimer.

The enzyme catalyses orotidine 5'-phosphate + H(+) = UMP + CO2. It functions in the pathway pyrimidine metabolism; UMP biosynthesis via de novo pathway; UMP from orotate: step 2/2. Catalyzes the decarboxylation of orotidine 5'-monophosphate (OMP) to uridine 5'-monophosphate (UMP). The polypeptide is Orotidine 5'-phosphate decarboxylase (Oenococcus oeni (strain ATCC BAA-331 / PSU-1)).